The sequence spans 429 residues: Enolase (429 aa).

Position 174 (Gln-174) interacts with (2R)-2-phosphoglycerate. The Proton donor role is filled by Glu-218. Mg(2+) is bound by residues Asp-254, Glu-295, and Asp-321. The (2R)-2-phosphoglycerate site is built by Lys-346, Arg-375, Ser-376, and Lys-397. Residue Lys-346 is the Proton acceptor of the active site.

This sequence belongs to the enolase family. Mg(2+) is required as a cofactor.

It is found in the cytoplasm. It localises to the secreted. Its subcellular location is the cell surface. It catalyses the reaction (2R)-2-phosphoglycerate = phosphoenolpyruvate + H2O. It participates in carbohydrate degradation; glycolysis; pyruvate from D-glyceraldehyde 3-phosphate: step 4/5. In terms of biological role, catalyzes the reversible conversion of 2-phosphoglycerate (2-PG) into phosphoenolpyruvate (PEP). It is essential for the degradation of carbohydrates via glycolysis. In Methanosarcina acetivorans (strain ATCC 35395 / DSM 2834 / JCM 12185 / C2A), this protein is Enolase.